The following is a 179-amino-acid chain: Apoptosis regulator Bcl-2 homolog (179 aa).

The BH1 signature appears at 76-95 (ELFKDLINWGRICGFIVFSA). Positions 126–141 (PWMISHGGQEEFLAFS) match the BH2 motif.

This sequence belongs to the Bcl-2 family. In terms of assembly, interacts with host BECN1 (via BH3 homology domain); this interaction allows the virus to inhibit BECN1, and thus autophagy. Interacts with host BID. Interacts with host BAX.

It localises to the host mitochondrion. It is found in the host endoplasmic reticulum. Functionally, suppresses apoptosis in host cell to promote the viral replication. Has the ability to potentially bind to all the members of the proapoptotic Bcl-2 family. Inhibits autophagy by interacting with host Beclin 1 (BECN1). The sequence is that of Apoptosis regulator Bcl-2 homolog from Ornithodoros (relapsing fever ticks).